The chain runs to 979 residues: Putative cellulose synthase-like protein D6 (979 aa).

Residues 1-24 (MMDGESPLRHPRISHVSNSGSDFG) are disordered. Residues 14–24 (SHVSNSGSDFG) are compositionally biased toward low complexity. 2 helical membrane passes run 116-136 (IIIA…ALFL) and 147-167 (ALWL…SWLL). Active-site residues include Asp-247 and Asp-683. Transmembrane regions (helical) follow at residues 765–785 (IFIL…HFVV), 788–808 (LTGS…GLAV), 837–857 (LVAV…SFTL), 882–902 (ALMI…LFAV), 913–933 (WSNL…MYPF), and 946–966 (TVVY…YITI).

Belongs to the glycosyltransferase 2 family. Plant cellulose synthase-like D subfamily.

The protein localises to the golgi apparatus membrane. Thought to be a Golgi-localized beta-glycan synthase that polymerize the backbones of noncellulosic polysaccharides (hemicelluloses) of plant cell wall. This is Putative cellulose synthase-like protein D6 (CSLD6) from Arabidopsis thaliana (Mouse-ear cress).